A 227-amino-acid chain; its full sequence is MRKRKLSDGVRCSARQKNRSCSGAQSSTDHEADTYGPKKKAASSNNTEKESSKKLRKDEKGPVEADENELLNKIDNAASNESSNVNDSQQSEKSITNTKDNGTRCSKLRANTRLPSSPVSDLNEVSCNGLTDDSGDGTGFIHKTCSEPSKLREIYLNGSPFVDEDSNQPMPLGLFFENADLMQDLPPAVPSCASMSRRELRNLHFRAKEEDEDDDDYVDGLANEGNI.

Disordered regions lie at residues 1–122 (MRKR…VSDL) and 207–227 (AKEE…EGNI). Positions 47-63 (TEKESSKKLRKDEKGPV) are enriched in basic and acidic residues. Polar residues-rich tracts occupy residues 77–104 (AASN…NGTR) and 113–122 (RLPSSPVSDL).

This sequence belongs to the UPF0688 family.

The protein localises to the nucleus. The chain is UPF0688 protein C1orf174 homolog from Xenopus tropicalis (Western clawed frog).